Here is a 122-residue protein sequence, read N- to C-terminus: Large ribosomal subunit protein bL17 (122 aa).

This sequence belongs to the bacterial ribosomal protein bL17 family. In terms of assembly, part of the 50S ribosomal subunit. Contacts protein L32.

This Neisseria meningitidis serogroup B (strain ATCC BAA-335 / MC58) protein is Large ribosomal subunit protein bL17.